Consider the following 117-residue polypeptide: Large ribosomal subunit protein eL18 (117 aa).

This sequence belongs to the eukaryotic ribosomal protein eL18 family.

The chain is Large ribosomal subunit protein eL18 from Archaeoglobus fulgidus (strain ATCC 49558 / DSM 4304 / JCM 9628 / NBRC 100126 / VC-16).